A 555-amino-acid polypeptide reads, in one-letter code: Dihydroxy-acid dehydratase (555 aa).

D80 is a Mg(2+) binding site. [2Fe-2S] cluster is bound at residue C121. Mg(2+) contacts are provided by D122 and K123. An N6-carboxylysine modification is found at K123. Residue C193 coordinates [2Fe-2S] cluster. E444 is a Mg(2+) binding site. S470 serves as the catalytic Proton acceptor.

It belongs to the IlvD/Edd family. Homodimer. Requires [2Fe-2S] cluster as cofactor. Mg(2+) serves as cofactor.

It carries out the reaction (2R)-2,3-dihydroxy-3-methylbutanoate = 3-methyl-2-oxobutanoate + H2O. It catalyses the reaction (2R,3R)-2,3-dihydroxy-3-methylpentanoate = (S)-3-methyl-2-oxopentanoate + H2O. Its pathway is amino-acid biosynthesis; L-isoleucine biosynthesis; L-isoleucine from 2-oxobutanoate: step 3/4. It functions in the pathway amino-acid biosynthesis; L-valine biosynthesis; L-valine from pyruvate: step 3/4. Functionally, functions in the biosynthesis of branched-chain amino acids. Catalyzes the dehydration of (2R,3R)-2,3-dihydroxy-3-methylpentanoate (2,3-dihydroxy-3-methylvalerate) into 2-oxo-3-methylpentanoate (2-oxo-3-methylvalerate) and of (2R)-2,3-dihydroxy-3-methylbutanoate (2,3-dihydroxyisovalerate) into 2-oxo-3-methylbutanoate (2-oxoisovalerate), the penultimate precursor to L-isoleucine and L-valine, respectively. This Aquifex aeolicus (strain VF5) protein is Dihydroxy-acid dehydratase.